Reading from the N-terminus, the 362-residue chain is Peptide chain release factor 1 (362 aa).

Gln238 carries the post-translational modification N5-methylglutamine.

The protein belongs to the prokaryotic/mitochondrial release factor family. Methylated by PrmC. Methylation increases the termination efficiency of RF1.

The protein localises to the cytoplasm. In terms of biological role, peptide chain release factor 1 directs the termination of translation in response to the peptide chain termination codons UAG and UAA. The protein is Peptide chain release factor 1 of Psychrobacter cryohalolentis (strain ATCC BAA-1226 / DSM 17306 / VKM B-2378 / K5).